We begin with the raw amino-acid sequence, 1047 residues long: Probable sucrose-phosphate synthase 2 (1047 aa).

The segment covering 101 to 123 has biased composition (basic and acidic residues); that stretch reads EGKNAKREAKREREREKARREVT. Residues 101–153 form a disordered region; sequence EGKNAKREAKREREREKARREVTAEMSEDFSEGEKADLPGEIPTPSDNNTKGR. Residues S127, S131, and S159 each carry the phosphoserine modification. Residues 712-731 are disordered; that stretch reads KSGSNNGVDTNLDAEDRAAE.

Belongs to the glycosyltransferase 1 family. Homodimer or homotetramer. Expressed in roots, cauline leaves, flower buds, flowers and anthers. Highly expressed in maturing nectaries.

It carries out the reaction beta-D-fructose 6-phosphate + UDP-alpha-D-glucose = sucrose 6(F)-phosphate + UDP + H(+). Its pathway is glycan biosynthesis; sucrose biosynthesis; sucrose from D-fructose 6-phosphate and UDP-alpha-D-glucose: step 1/2. Activity is regulated by phosphorylation and moderated by concentration of metabolites and light. Functionally, plays a role in photosynthetic sucrose synthesis by catalyzing the rate-limiting step of sucrose biosynthesis from UDP-glucose and fructose- 6-phosphate. Involved in the regulation of carbon partitioning in the leaves of plants. May regulate the synthesis of sucrose and therefore play a major role as a limiting factor in the export of photoassimilates out of the leaf. Plays a role for sucrose availability that is essential for plant growth and fiber elongation. Required for nectar secretion. The protein is Probable sucrose-phosphate synthase 2 (SPS2) of Arabidopsis thaliana (Mouse-ear cress).